Consider the following 571-residue polypeptide: Proline--tRNA ligase (571 aa).

The protein belongs to the class-II aminoacyl-tRNA synthetase family. ProS type 1 subfamily. Homodimer.

Its subcellular location is the cytoplasm. The catalysed reaction is tRNA(Pro) + L-proline + ATP = L-prolyl-tRNA(Pro) + AMP + diphosphate. In terms of biological role, catalyzes the attachment of proline to tRNA(Pro) in a two-step reaction: proline is first activated by ATP to form Pro-AMP and then transferred to the acceptor end of tRNA(Pro). As ProRS can inadvertently accommodate and process non-cognate amino acids such as alanine and cysteine, to avoid such errors it has two additional distinct editing activities against alanine. One activity is designated as 'pretransfer' editing and involves the tRNA(Pro)-independent hydrolysis of activated Ala-AMP. The other activity is designated 'posttransfer' editing and involves deacylation of mischarged Ala-tRNA(Pro). The misacylated Cys-tRNA(Pro) is not edited by ProRS. The polypeptide is Proline--tRNA ligase (Pseudomonas entomophila (strain L48)).